Here is a 568-residue protein sequence, read N- to C-terminus: DNA mismatch repair protein MutL (568 aa).

This sequence belongs to the DNA mismatch repair MutL/HexB family.

In terms of biological role, this protein is involved in the repair of mismatches in DNA. It is required for dam-dependent methyl-directed DNA mismatch repair. May act as a 'molecular matchmaker', a protein that promotes the formation of a stable complex between two or more DNA-binding proteins in an ATP-dependent manner without itself being part of a final effector complex. This is DNA mismatch repair protein MutL from Nostoc punctiforme (strain ATCC 29133 / PCC 73102).